Reading from the N-terminus, the 542-residue chain is Probable quinate permease (542 aa).

The Cytoplasmic portion of the chain corresponds to 1–22; sequence MSILALVEDRPTPKEVYNWKIY. The chain crosses the membrane as a helical span at residues 23-43; the sequence is LLAAVASFTSCMIGYDSAFIG. The Extracellular portion of the chain corresponds to 44 to 74; that stretch reads TTLALSSFREEFGFSTMSKTAVNLVSANIVS. Residues 75–95 form a helical membrane-spanning segment; it reads CYQAGAFFGAFFAYPIGHFWG. Topologically, residues 96–97 are cytoplasmic; that stretch reads RK. The helical transmembrane segment at 98-118 threads the bilayer; it reads WGLLFAGTIFTLGAGLMLGAN. The Extracellular segment spans residues 119–130; the sequence is GDRGLGLLYGGR. Residues 131 to 151 traverse the membrane as a helical segment; it reads VLAGLGVGAGSNITPIYISEM. Over 152 to 159 the chain is Cytoplasmic; sequence APPSIRGR. Residues 160 to 180 form a helical membrane-spanning segment; the sequence is LVGVYELGWQIGGLVGFWINY. The Extracellular portion of the chain corresponds to 181-193; that stretch reads GVSETLAPSHKQW. The helical transmembrane segment at 194 to 214 threads the bilayer; sequence IIPFAVQLIPSGLLLIGAVFL. The Cytoplasmic portion of the chain corresponds to 215 to 285; that stretch reads KESPRWLFSR…AGTNKKVMYR (71 aa). Residues 286–306 form a helical membrane-spanning segment; that stretch reads LFLGSMLFFWQNGSGINAINY. Topologically, residues 307–325 are extracellular; sequence YSPTVFKSIGLHGANTSMF. The chain crosses the membrane as a helical span at residues 326-346; it reads STGIFGVVKTVVTFVWLLYLI. Topologically, residues 347-352 are cytoplasmic; that stretch reads DRLGRR. Residues 353-373 form a helical membrane-spanning segment; it reads LLLLIGAAGAAVCLLIVGAYI. Residues 374–387 lie on the Extracellular side of the membrane; it reads KIADPASNPTQEMT. The chain crosses the membrane as a helical span at residues 388–408; it reads GGGIAAMFFFYLYTVFYTPSW. Topologically, residues 409–456 are cytoplasmic; that stretch reads NGTPWVMNSEMFEPNMRSLAQACAAASNWLWNFLISRFTPQMFAKMEY. The chain crosses the membrane as a helical span at residues 457–477; sequence GVWFFFASLMLLSIVFVFFLV. Over 478-542 the chain is Extracellular; that stretch reads PETKGIPLES…EHVSEDLPKV (65 aa). A disordered region spans residues 523–542; sequence GYSKTGEQQVEHVSEDLPKV. Basic and acidic residues predominate over residues 531–542; that stretch reads QVEHVSEDLPKV.

Belongs to the major facilitator superfamily. Sugar transporter (TC 2.A.1.1) family. Interacts with creB. Ubiquitinated. Deubiquitinated by creB, probably to control its activity or amount.

It localises to the cell membrane. In terms of biological role, integral membrane transporter that imports quinic acid to be catabolized as a carbon source. This chain is Probable quinate permease (qutD), found in Aspergillus fumigatus (strain CBS 144.89 / FGSC A1163 / CEA10) (Neosartorya fumigata).